A 430-amino-acid chain; its full sequence is tRNA-2-methylthio-N(6)-dimethylallyladenosine synthase (430 aa).

The MTTase N-terminal domain maps to 2–111; it reads KKIHIKTYGC…IPQAVERAIN (110 aa). Residues Cys11, Cys47, Cys76, Cys147, Cys151, and Cys154 each coordinate [4Fe-4S] cluster. A Radical SAM core domain is found at 133-364; sequence RNSKHHAWIT…LNLQKEINKQ (232 aa). The TRAM domain occupies 367 to 428; sequence ENYLNKTVEI…AGPLYGDIIK (62 aa).

This sequence belongs to the methylthiotransferase family. MiaB subfamily. Monomer. It depends on [4Fe-4S] cluster as a cofactor.

It localises to the cytoplasm. The catalysed reaction is N(6)-dimethylallyladenosine(37) in tRNA + (sulfur carrier)-SH + AH2 + 2 S-adenosyl-L-methionine = 2-methylsulfanyl-N(6)-dimethylallyladenosine(37) in tRNA + (sulfur carrier)-H + 5'-deoxyadenosine + L-methionine + A + S-adenosyl-L-homocysteine + 2 H(+). In terms of biological role, catalyzes the methylthiolation of N6-(dimethylallyl)adenosine (i(6)A), leading to the formation of 2-methylthio-N6-(dimethylallyl)adenosine (ms(2)i(6)A) at position 37 in tRNAs that read codons beginning with uridine. This is tRNA-2-methylthio-N(6)-dimethylallyladenosine synthase from Thermosipho melanesiensis (strain DSM 12029 / CIP 104789 / BI429).